The chain runs to 226 residues: Small ribosomal subunit protein uS5 (226 aa).

A compositionally biased stretch (polar residues) spans 1–18 (MAAPQRSRTTGAPSSGGP). The segment at 1–45 (MAAPQRSRTTGAPSSGGPSENERGRGGDRRGGDRRGGDRRGGDDR) is disordered. Basic and acidic residues predominate over residues 20–45 (ENERGRGGDRRGGDRRGGDRRGGDDR). The 64-residue stretch at 48–111 (FVERVVTINR…EEAKKNFFRV (64 aa)) folds into the S5 DRBM domain.

This sequence belongs to the universal ribosomal protein uS5 family. In terms of assembly, part of the 30S ribosomal subunit. Contacts proteins S4 and S8.

Functionally, with S4 and S12 plays an important role in translational accuracy. In terms of biological role, located at the back of the 30S subunit body where it stabilizes the conformation of the head with respect to the body. The chain is Small ribosomal subunit protein uS5 from Beutenbergia cavernae (strain ATCC BAA-8 / DSM 12333 / CCUG 43141 / JCM 11478 / NBRC 16432 / NCIMB 13614 / HKI 0122).